The following is a 732-amino-acid chain: 1,4-alpha-glucan branching enzyme GlgB (732 aa).

The Nucleophile role is filled by Asp412. Glu465 (proton donor) is an active-site residue.

Belongs to the glycosyl hydrolase 13 family. GlgB subfamily. Monomer.

The enzyme catalyses Transfers a segment of a (1-&gt;4)-alpha-D-glucan chain to a primary hydroxy group in a similar glucan chain.. It participates in glycan biosynthesis; glycogen biosynthesis. Catalyzes the formation of the alpha-1,6-glucosidic linkages in glycogen by scission of a 1,4-alpha-linked oligosaccharide from growing alpha-1,4-glucan chains and the subsequent attachment of the oligosaccharide to the alpha-1,6 position. In Pseudomonas aeruginosa (strain ATCC 15692 / DSM 22644 / CIP 104116 / JCM 14847 / LMG 12228 / 1C / PRS 101 / PAO1), this protein is 1,4-alpha-glucan branching enzyme GlgB.